The sequence spans 685 residues: E3 ubiquitin ligase Rnf157 (685 aa).

Residue G2 is the site of N-myristoyl glycine attachment. An RING-type zinc finger spans residues 276-315 (ECVVCLSDVRDTLILPCRHLCLCNTCADTLRYQANNCPIC). A D-box 1 motif is present at residues 329–332 (RKKL). Disordered stretches follow at residues 339–361 (SFNPIISSQTSDSEEHSSSENIP), 433–584 (LSKS…AGEQ), and 650–672 (LGGRRPSARPRSPRGGLGKEASA). Positions 434–443 (SKSISQNSSV) are enriched in low complexity. Residues 478-537 (ESENLTLSSSGAVDQSSCTGTPLSSTISSPEDPASSSLAQSVMSMASSQISTDTVSSMSG) are compositionally biased toward polar residues. Low complexity predominate over residues 552–561 (PSPRAASRAP). The D-box 2 signature appears at 657-660 (ARPR).

As to quaternary structure, interacts with APBB1. Interacts with CHD1; CHD1-binding controls RNF157 stability. Also interacts with ATRN, MEGF8, TECR, MSI2, PLRG1, BYSL, MTERF3, PSMA1, MRPS18B, PRPF4, FASTKD2, SLC25A1, SMU1, CNOT9, MRPS2, MAGT1, FXR2, EMD, PSMD8, HDAC1, RAN, HSD17B12, TXNDC5 and MRPL19.

The protein resides in the cytoplasm. It carries out the reaction S-ubiquitinyl-[E2 ubiquitin-conjugating enzyme]-L-cysteine + [acceptor protein]-L-lysine = [E2 ubiquitin-conjugating enzyme]-L-cysteine + N(6)-ubiquitinyl-[acceptor protein]-L-lysine.. E3 ubiquitin ligase that ubiquitinates APBB1 for its degradation by the proteasome and thus prevents apoptosis and promotes survival of neurons. Has a dual role in neurons as it is also required for dendrite growth and maintenance for which its ligase activity is not critical. May act as a scaffold molecule to regulate this process. Acts as a downstream effector of the interconnected PI3K and MAPK signaling pathways and thus participates in the regulation of the cell cycle. This chain is E3 ubiquitin ligase Rnf157 (Rnf157), found in Mus musculus (Mouse).